Here is a 397-residue protein sequence, read N- to C-terminus: S-adenosylmethionine synthase (397 aa).

An ATP-binding site is contributed by H15. D17 is a Mg(2+) binding site. E43 is a binding site for K(+). E56 and Q99 together coordinate L-methionine. Residues 99 to 109 form a flexible loop region; it reads QSPDIAMGVNK. ATP contacts are provided by residues 175–177, 241–242, D250, 256–257, A273, and K277; these read DGK, RF, and RK. D250 contacts L-methionine. K281 is an L-methionine binding site.

It belongs to the AdoMet synthase family. As to quaternary structure, homotetramer; dimer of dimers. Mg(2+) serves as cofactor. The cofactor is K(+).

The protein localises to the cytoplasm. It catalyses the reaction L-methionine + ATP + H2O = S-adenosyl-L-methionine + phosphate + diphosphate. It participates in amino-acid biosynthesis; S-adenosyl-L-methionine biosynthesis; S-adenosyl-L-methionine from L-methionine: step 1/1. Its function is as follows. Catalyzes the formation of S-adenosylmethionine (AdoMet) from methionine and ATP. The overall synthetic reaction is composed of two sequential steps, AdoMet formation and the subsequent tripolyphosphate hydrolysis which occurs prior to release of AdoMet from the enzyme. The polypeptide is S-adenosylmethionine synthase (Acetivibrio thermocellus (strain ATCC 27405 / DSM 1237 / JCM 9322 / NBRC 103400 / NCIMB 10682 / NRRL B-4536 / VPI 7372) (Clostridium thermocellum)).